A 2924-amino-acid polypeptide reads, in one-letter code: Zinc finger ZZ-type and EF-hand domain-containing protein 1 (2924 aa).

Residues 1-41 (MGNAPSNSSEDEAAAAGGEGWSPHQDWAADSGTTPGPGPAA) form a disordered region. A lipid anchor (N-myristoyl glycine) is attached at Gly2. Positions 28–41 (AADSGTTPGPGPAA) are enriched in low complexity. An EF-hand domain is found at 111-146 (CSGEQFEEAFAQFDAEGDGTVDAENMLEALKNSSGA). Residues 226–405 (LVQKEKESPG…AIWYWSLLTS (180 aa)) form the DOC domain. Ser240 bears the Phosphoserine mark. Basic and acidic residues predominate over residues 1452-1470 (HLQPLDRRQRTSSVVEEHF). A disordered region spans residues 1452–1527 (HLQPLDRRQR…STPTRRPPFT (76 aa)). Residues 1472–1485 (GSASPTEAATPAAG) show a composition bias toward low complexity. 3 positions are modified to phosphoserine: Ser1475, Ser1488, and Ser1509. Thr1510 bears the Phosphothreonine mark. Over residues 1514-1523 (PSPPSTPTRR) the composition is skewed to pro residues. Ser1515 is subject to Phosphoserine. Phosphothreonine occurs at positions 1519 and 1521. Ser1535 and Ser1538 each carry phosphoserine. 2 consecutive ZZ-type zinc fingers follow at residues 1776–1831 (NVDI…FTCD) and 1825–1880 (NMEF…MVTI). Positions 1781, 1784, 1795, 1798, 1804, 1807, 1817, 1821, 1830, 1833, 1844, 1847, 1853, 1856, 1866, and 1870 each coordinate Zn(2+). The disordered stretch occupies residues 2388–2418 (DLELDERGDQEEELDRPVSSPGEAEQKKLDP). The residue at position 2407 (Ser2407) is a Phosphoserine. N6-acetyllysine is present on Lys2630.

In terms of assembly, interacts with KLF6 and KLF9. Interacts via (ZZ-type 2 zinc finger) with histone H3 trimethylated at 'Lys-4' (H3K4me3) and histone H3 acetylated at 'Lys-4' (H3K4ac).

Its function is as follows. Histone H3 reader which may act as a transcriptional coactivator for KLF6 and KLF9 transcription factors. The sequence is that of Zinc finger ZZ-type and EF-hand domain-containing protein 1 (Zzef1) from Mus musculus (Mouse).